Reading from the N-terminus, the 512-residue chain is 3-ketoacyl-CoA synthase 9 (512 aa).

A run of 2 helical transmembrane segments spans residues 44–64 and 83–103; these read LITH…VTEI and LVAF…YIMS. Residues 100–389 enclose the FAE domain; that stretch reads YIMSRPRSVY…FFMTLVTKKL (290 aa). Active-site residues include C244, H323, H407, H411, H440, and N444.

Belongs to the thiolase-like superfamily. Chalcone/stilbene synthases family. In terms of tissue distribution, expressed in seedlings, stems, leaves, flowers and siliques. Expressed in roots, leaves, and stems, including epidermis, silique walls, sepals, the upper portion of the styles, and seed coats, but not in developing embryos.

It localises to the endoplasmic reticulum membrane. The enzyme catalyses a very-long-chain acyl-CoA + malonyl-CoA + H(+) = a very-long-chain 3-oxoacyl-CoA + CO2 + CoA. Its pathway is lipid metabolism; fatty acid biosynthesis. Its function is as follows. Involved in the elongation of C22 to C24 fatty acids, which are precursors for the biosynthesis of cuticular waxes, aliphatic suberins, and membrane lipids, including sphingolipids and phospholipids. This Arabidopsis thaliana (Mouse-ear cress) protein is 3-ketoacyl-CoA synthase 9.